Reading from the N-terminus, the 83-residue chain is Alpha-neurotoxin NTX-2 (83 aa).

An N-terminal signal peptide occupies residues 1 to 21 (MKTLLLTLLVVTIVCLDLGYT). 4 cysteine pairs are disulfide-bonded: Cys-24-Cys-45, Cys-38-Cys-62, Cys-64-Cys-75, and Cys-76-Cys-81.

The protein belongs to the three-finger toxin family. Short-chain subfamily. Type I alpha-neurotoxin sub-subfamily. In terms of tissue distribution, expressed by the venom gland.

Its subcellular location is the secreted. Functionally, binds to muscle nicotinic acetylcholine receptor (nAChR) and inhibit acetylcholine from binding to the receptor, thereby impairing neuromuscular transmission. This chain is Alpha-neurotoxin NTX-2, found in Naja sputatrix (Malayan spitting cobra).